The following is a 368-amino-acid chain: L-lactate oxidase (368 aa).

Positions 13-368 (VNAIDVLDLA…KQMKVKTTFA (356 aa)) constitute an FMN hydroxy acid dehydrogenase domain. Pyruvate is bound at residue Y39. FMN is bound by residues 92 to 94 (PIA), S121, and Q143. Y145 is a binding site for pyruvate. FMN is bound at residue T171. A pyruvate-binding site is contributed by R180. Residues K239 and S261 each contribute to the FMN site. Positions 263 and 266 each coordinate pyruvate. H263 serves as the catalytic Proton acceptor. FMN-binding positions include 294–298 (DGGVQ) and R318.

It belongs to the FMN-dependent alpha-hydroxy acid dehydrogenase family. In terms of assembly, homotetramer. It depends on FMN as a cofactor.

The catalysed reaction is (S)-lactate + O2 = pyruvate + H2O2. It carries out the reaction 2-hydroxyoctanoate + O2 = 2-oxooctanoate + H2O2. In terms of biological role, catalyzes the oxidation of (S)-lactate (L-lactate) to pyruvate, with a reduction of O2 to H2O2. To a lesser extent is also able to use 2-hydroxyoctanoate as substrate. May be involved in the utilization of L-lactate as an energy source for growth. The protein is L-lactate oxidase of Lacticaseibacillus rhamnosus (strain LMS2-1).